Consider the following 132-residue polypeptide: Pro-MCH 1 (132 aa).

Residues 1–24 (MRHSVLSISFAVALFLECYTPSTA) form the signal peptide. Cys-120 and Cys-129 are oxidised to a cystine.

This sequence belongs to the melanin-concentrating hormone family. As to expression, pituitary gland. Produced in neurons of lateral basal hypothalamus which project both to the brain and to the neural lobe of the pituitary gland from where MCH is released.

Its function is as follows. Plays a role in skin pigmentation by antagonizing the action of melanotropin alpha. Induces melanin concentration within the melanophores. May participate in the control of the hypothalamo-pituitary adrenal gland axis by inhibiting the release of ACTH. The chain is Pro-MCH 1 (mch1) from Oncorhynchus mykiss (Rainbow trout).